Consider the following 404-residue polypeptide: Iron-sulfur assembly protein IscA2 (404 aa).

Residues 244 to 289 are a coiled coil; the sequence is KEEDEKKLDKLLKKRNIKKRDIVTITEEAKEELKKIISINKKENNN.

This sequence belongs to the HesB/IscA family. In terms of assembly, dimer. Homotetramer. Interacts with ABCB6.

It is found in the mitochondrion. It participates in cofactor biosynthesis; iron-sulfur cluster biosynthesis. In terms of biological role, participates in iron-sulfur cluster formation (ISC) pathway for iron-sulfur (Fe-S) cluster biogenesis. Can bind and transfer [4Fe-4S] clusters to target apo-proteins. The polypeptide is Iron-sulfur assembly protein IscA2 (Plasmodium falciparum (isolate 3D7)).